Consider the following 471-residue polypeptide: 6-phosphogluconate dehydrogenase, decarboxylating (471 aa).

Residues 10-15, 33-35, 75-77, and Asn-103 each bind NADP(+); these read GLAVMG, NRT, and VKA. Residues Asn-103 and 129–131 contribute to the substrate site; that span reads SGG. Lys-183 acts as the Proton acceptor in catalysis. 186-187 serves as a coordination point for substrate; sequence HN. Glu-190 (proton donor) is an active-site residue. Tyr-191, Lys-263, Arg-290, Arg-449, and His-455 together coordinate substrate.

Belongs to the 6-phosphogluconate dehydrogenase family. As to quaternary structure, homodimer.

It catalyses the reaction 6-phospho-D-gluconate + NADP(+) = D-ribulose 5-phosphate + CO2 + NADPH. It participates in carbohydrate degradation; pentose phosphate pathway; D-ribulose 5-phosphate from D-glucose 6-phosphate (oxidative stage): step 3/3. Catalyzes the oxidative decarboxylation of 6-phosphogluconate to ribulose 5-phosphate and CO(2), with concomitant reduction of NADP to NADPH. The polypeptide is 6-phosphogluconate dehydrogenase, decarboxylating (gnd) (Synechococcus elongatus (strain ATCC 33912 / PCC 7942 / FACHB-805) (Anacystis nidulans R2)).